A 216-amino-acid polypeptide reads, in one-letter code: Small ribosomal subunit protein uS5 (216 aa).

Positions 1-55 (MDRKLENQKDLLNQDPKVELNSQSVAKNPLNSREVKPIQRRRPLRKNSRDKNSKP) are disordered. The segment covering 20-31 (LNSQSVAKNPLN) has biased composition (polar residues). Residues 57–120 (FEERVIAIHR…KDAQNRLVSV (64 aa)) enclose the S5 DRBM domain.

This sequence belongs to the universal ribosomal protein uS5 family. As to quaternary structure, part of the 30S ribosomal subunit. Contacts proteins S4 and S8.

With S4 and S12 plays an important role in translational accuracy. In terms of biological role, located at the back of the 30S subunit body where it stabilizes the conformation of the head with respect to the body. The protein is Small ribosomal subunit protein uS5 of Mesomycoplasma hyopneumoniae (strain J / ATCC 25934 / NCTC 10110) (Mycoplasma hyopneumoniae).